We begin with the raw amino-acid sequence, 574 residues long: Interleukin-22 receptor subunit alpha-1 (574 aa).

A signal peptide spans 1–15 (MRTLLTILTVGSLAA). At 16-228 (HAPEDPSDLL…VKTLPDRTWT (213 aa)) the chain is on the extracellular side. Fibronectin type-III domains are found at residues 17-124 (APED…LKPP) and 141-221 (PTPT…RVKT). Cysteine 71 and cysteine 79 are disulfide-bonded. Residues asparagine 80 and asparagine 172 are each glycosylated (N-linked (GlcNAc...) asparagine). Residues cysteine 128 and cysteine 217 are joined by a disulfide bond. A helical transmembrane segment spans residues 229–249 (YSFSGAFLFSMGFLVAVLCYL). Topologically, residues 250-574 (SYRYVTKPPA…GLALTVQWES (325 aa)) are cytoplasmic. 3 disordered regions span residues 388 to 440 (SSYA…AGSC), 454 to 489 (AMEESQEAKSLHQPLGICTDRTSDPNVLHSGEEGTP), and 507 to 560 (HPMS…TELD). Residues serine 410 and serine 414 each carry the phosphoserine modification.

This sequence belongs to the type II cytokine receptor family. In terms of assembly, heterodimer with IL10RB and with IL20RB. IL22 binding to heterodimer is greater than binding to IL22RA1 alone. Interacts with FBXW12; the interaction promotes ubiquitination of IL22RA1. Post-translationally, ubiquitinated. In terms of tissue distribution, expressed in colon, liver, lung, pancreas and kidney. No expression in immune cells such as monocytes, T-cells, and NK-cells. Expressed in keratinocytes of normal skin as well as in psoriatic skin lesion. Detected in normal blood brain barrier endothelial cells as well as in multiple sclerosis lesions; Strongly expressed on central nervous system vessels within infiltrated multiple sclerosis lesions. Overexpressed in synovial fluid cells from rheumatoid arthritis and spondyloarthropathy patients.

It localises to the cell membrane. Functionally, component of the receptor for IL20, IL22 and IL24. Component of IL22 receptor formed by IL22RA1 and IL10RB enabling IL22 signaling via JAK/STAT pathways. IL22 also induces activation of MAPK1/MAPK3 and Akt kinases pathways. Component of one of the receptor for IL20 and IL24 formed by IL22RA1 and IL20RB also signaling through STATs activation. Mediates IL24 antiangiogenic activity as well as IL24 inhibitory effect on endothelial cell tube formation and differentiation. In Homo sapiens (Human), this protein is Interleukin-22 receptor subunit alpha-1 (IL22RA1).